We begin with the raw amino-acid sequence, 210 residues long: ESCRT-III complex subunit did4 (210 aa).

Residues 1-38 (MGLTSWLFGGGKSPQEQLRAHQRSLGRAERELDRERTK) are disordered. A coiled-coil region spans residues 15–97 (QEQLRAHQRS…AISLRLQTMR (83 aa)). Residues 26-38 (GRAERELDRERTK) show a composition bias toward basic and acidic residues.

Belongs to the SNF7 family. In terms of assembly, core component of the ESCRT-III complex (endosomal sorting required for transport complex III). ESCRT-III appears to be sequentially assembled as a flat lattice on the endosome membrane.

It localises to the cytoplasm. Its subcellular location is the endosome membrane. In terms of biological role, required for the sorting and concentration of proteins resulting in the entry of these proteins into the invaginating vesicles of the multivesicular body (MVB). Acts a component of the ESCRT-III complex, which appears to be critical for late steps in MVB sorting, such as membrane invagination and final cargo sorting and recruitment of late-acting components of the sorting machinery. The MVB pathway requires the sequential function of ESCRT-O, -I,-II and -III complex assemblies. This Schizosaccharomyces pombe (strain 972 / ATCC 24843) (Fission yeast) protein is ESCRT-III complex subunit did4 (did4).